A 352-amino-acid chain; its full sequence is Zinc finger CCCH domain-containing protein 42 (352 aa).

Positions 36-114 constitute an RRM domain; that stretch reads AYVYVGGIPF…RTIKVDHCGA (79 aa). 2 consecutive C3H1-type zinc fingers follow at residues 130 to 157 and 180 to 207; these read REAR…HDEK and REGR…HDEK. Residues 156–179 form a disordered region; the sequence is EKRAANTGWGHEEDRSSKWDHDKN. Basic and acidic residues-rich tracts occupy residues 210–230, 243–296, and 304–352; these read ATTG…DKLN, GDFK…RSGR, and RHND…DRRR. The disordered stretch occupies residues 210-352; the sequence is ATTGWGHEED…DSLRREDRRR (143 aa). Residues 319–348 adopt a coiled-coil conformation; the sequence is RAQDWEKRKAESRRDRNDREEKDRDSLRRE.

This Arabidopsis thaliana (Mouse-ear cress) protein is Zinc finger CCCH domain-containing protein 42.